A 768-amino-acid chain; its full sequence is Dual specificity calcium/calmodulin-dependent 3',5'-cyclic nucleotide phosphodiesterase 1C (768 aa).

Met1 bears the N-acetylmethionine mark. The segment at Glu183 to Arg206 is calmodulin-binding. In terms of domain architecture, PDEase spans Val211 to Glu588. Catalysis depends on His288, which acts as the Proton donor. Positions 292, 328, 329, and 436 each coordinate Zn(2+). Residue Asp329 participates in Mg(2+) binding. 2 disordered regions span residues Leu513–Ser557 and Lys584–Arg719. 2 stretches are compositionally biased toward polar residues: residues Glu516–Ser536 and Val543–Ser557. A compositionally biased stretch (basic and acidic residues) spans Lys584 to Ser614. A compositionally biased stretch (polar residues) spans Glu631–Thr641. Basic and acidic residues-rich tracts occupy residues Ser642 to Glu659 and Asp665 to Lys692. A compositionally biased stretch (low complexity) spans Ser698–Pro712.

This sequence belongs to the cyclic nucleotide phosphodiesterase family. PDE1 subfamily. As to quaternary structure, homodimer. It depends on Zn(2+) as a cofactor. Mg(2+) serves as cofactor. In terms of tissue distribution, highly expressed in olfactory epithelium and at moderate levels, in cerebellum, as well as weakly in forebrain, testis, heart and lung. In the olfactory epithelium, expressed by sensory neurons, but not epithelial cells.

It localises to the lysosome. The catalysed reaction is a nucleoside 3',5'-cyclic phosphate + H2O = a nucleoside 5'-phosphate + H(+). The enzyme catalyses 3',5'-cyclic GMP + H2O = GMP + H(+). It catalyses the reaction 3',5'-cyclic AMP + H2O = AMP + H(+). Type I PDE are activated by the binding of calmodulin in the presence of Ca(2+). In terms of biological role, calmodulin-dependent cyclic nucleotide phosphodiesterase with a dual specificity for the second messengers cAMP and cGMP, which are key regulators of many important physiological processes. Has a high affinity for both cAMP and cGMP. Modulates the amplitude and duration of the cAMP signal in sensory cilia in response to odorant stimulation, hence contributing to the generation of action potentials. Regulates smooth muscle cell proliferation. Regulates the stability of growth factor receptors, including PDGFRB. This chain is Dual specificity calcium/calmodulin-dependent 3',5'-cyclic nucleotide phosphodiesterase 1C, found in Rattus norvegicus (Rat).